We begin with the raw amino-acid sequence, 430 residues long: T-kininogen 1 (430 aa).

An N-terminal signal peptide occupies residues 1–18; it reads MKLITILLLCSRLLPSLA. At Q19 the chain carries Pyrrolidone carboxylic acid. The Cystatin kininogen-type 1 domain maps to 28–131; it reads CNDETVFQAV…TQICNITPGK (104 aa). Cystine bridges form between C28–C404, C83–C94, C107–C125, C141–C144, C205–C217, C228–C247, C263–C266, C327–C339, and C350–C369. N82 is a glycosylation site (N-linked (GlcNAc...) asparagine). Positions 150–253 constitute a Cystatin kininogen-type 2 domain; sequence MDSSDLKPVL…SQSCDLYPGD (104 aa). N-linked (GlcNAc...) asparagine glycosylation is found at N168 and N204. The Cystatin kininogen-type 3 domain occupies 272–375; the sequence is VDSPELKEAL…TVRCQALDMM (104 aa). N-linked (GlcNAc...) asparagine glycosylation is present at N326. The interval 411–430 is disordered; it reads SKARAGPAPDHQAEASTVTP.

As T-kinin is preceded by a Met instead of an Arg or Lys, it is not released from its precursor by either tissue or plasma kallikrein. As to expression, plasma.

It localises to the secreted. Its subcellular location is the extracellular space. Its function is as follows. Kininogens are plasma glycoproteins with a number of functions: (1) as precursor of the active peptide bradykinin they effect smooth muscle contraction, induction of hypotension and increase of vascular permeability. (2) They play a role in blood coagulation by helping to position optimally prekallikrein and factor XI next to factor XII. (3) They are inhibitor of thiol proteases. The sequence is that of T-kininogen 1 (Map1) from Rattus norvegicus (Rat).